Reading from the N-terminus, the 191-residue chain is Salivary lipocalin (191 aa).

A signal peptide spans 1 to 16 (MKLLLLLCLGLTLASS). N-linked (GlcNAc...) asparagine glycosylation occurs at N69. C84 and C176 form a disulfide bridge.

This sequence belongs to the calycin superfamily. Lipocalin family. As to quaternary structure, homodimer. In the submaxillary salivary glands of mature male pigs, but absent from that of females. Expression was much lower in submaxillary glands of castrated male pigs than in sexually mature individuals.

It localises to the secreted. Functionally, binds pheromones, the pheromones are released from the saliva of males and affect the sexual behavior of females. The protein is Salivary lipocalin (SAL1) of Sus scrofa (Pig).